Here is a 122-residue protein sequence, read N- to C-terminus: Basic phospholipase A2 homolog myotoxin II (122 aa).

Disulfide bonds link Cys26–Cys116, Cys28–Cys44, Cys43–Cys95, Cys49–Cys122, Cys50–Cys88, Cys57–Cys81, and Cys75–Cys86. Positions 105–118 (KKYRYNYLKPFCKK) are important for membrane-damaging activities in eukaryotes and bacteria; heparin-binding.

Belongs to the phospholipase A2 family. Group II subfamily. K49 sub-subfamily. In terms of assembly, homodimer; non-covalently linked (probable alternative/compact dimer conformation). As to expression, expressed by the venom gland.

Its subcellular location is the secreted. With respect to regulation, myotoxic activity is inhibited by suramin and rosmarinic acid. Cytotoxic and myotoxic activities are inhibited by pre-incubation with varespladib. Suramin inhibits this myotoxin by (i) direct blockage of the MDoS and MDiS, preventing the toxin/membrane interaction and disruption and (ii) formation of an oligomeric complex, resulting in a tetrameric configuration for which both MDoS and MDiS becomes physically inaccessible, thus avoiding any possibility of toxin-membrane interaction or disruption. Heparin completely inhibits the cytotoxic and bactericidal activities, but only partially the myotoxic, edema-inducing and lethal effects. Functionally, snake venom phospholipase A2 (PLA2) homolog that lacks enzymatic activity. Shows high myotoxin activities. Also shows neurotoxicity, since it induces muscle paralysis when tested on mouse phrenic-diaphragm preparations. Displays edema-inducing activities. Also displays antimicrobial activity against E.coli and C.albicans, as well as antitumoral activity against some human and mice cell lines. In addition, it is effective as parasiticidal agent against Leishmania sp. and S.mansoni. It also disrupts negatively charged liposomes in a dose- and temperature-dependent manner and shows toxicity by intraperitoneal route. In contrast to other phospholipase A2-like toxins, this myotoxin does not require fatty acid binding to be active. The polypeptide is Basic phospholipase A2 homolog myotoxin II (Bothrops moojeni (Lance-headed viper)).